A 257-amino-acid polypeptide reads, in one-letter code: Imidazole glycerol phosphate synthase subunit HisF (257 aa).

Active-site residues include Asp11 and Asp130.

It belongs to the HisA/HisF family. Heterodimer of HisH and HisF.

The protein resides in the cytoplasm. It carries out the reaction 5-[(5-phospho-1-deoxy-D-ribulos-1-ylimino)methylamino]-1-(5-phospho-beta-D-ribosyl)imidazole-4-carboxamide + L-glutamine = D-erythro-1-(imidazol-4-yl)glycerol 3-phosphate + 5-amino-1-(5-phospho-beta-D-ribosyl)imidazole-4-carboxamide + L-glutamate + H(+). It participates in amino-acid biosynthesis; L-histidine biosynthesis; L-histidine from 5-phospho-alpha-D-ribose 1-diphosphate: step 5/9. Its function is as follows. IGPS catalyzes the conversion of PRFAR and glutamine to IGP, AICAR and glutamate. The HisF subunit catalyzes the cyclization activity that produces IGP and AICAR from PRFAR using the ammonia provided by the HisH subunit. In Vibrio campbellii (strain ATCC BAA-1116), this protein is Imidazole glycerol phosphate synthase subunit HisF.